Here is a 339-residue protein sequence, read N- to C-terminus: Heat-inducible transcription repressor HrcA (339 aa).

Belongs to the HrcA family.

Functionally, negative regulator of class I heat shock genes (grpE-dnaK-dnaJ and groELS operons). Prevents heat-shock induction of these operons. This chain is Heat-inducible transcription repressor HrcA, found in Paraburkholderia xenovorans (strain LB400).